A 342-amino-acid polypeptide reads, in one-letter code: Protein RecA (342 aa).

65-72 (GPESSGKT) provides a ligand contact to ATP.

The protein belongs to the RecA family.

Its subcellular location is the cytoplasm. Can catalyze the hydrolysis of ATP in the presence of single-stranded DNA, the ATP-dependent uptake of single-stranded DNA by duplex DNA, and the ATP-dependent hybridization of homologous single-stranded DNAs. It interacts with LexA causing its activation and leading to its autocatalytic cleavage. In Caldanaerobacter subterraneus subsp. tengcongensis (strain DSM 15242 / JCM 11007 / NBRC 100824 / MB4) (Thermoanaerobacter tengcongensis), this protein is Protein RecA.